Reading from the N-terminus, the 261-residue chain is Cytochrome c oxidase subunit 3 (261 aa).

At 1–15 the chain is on the mitochondrial matrix side; it reads MTHQTHAYHMVNPSP. The chain crosses the membrane as a helical span at residues 16–34; it reads WPLTGALSALLMTSGLIMW. Residues 35 to 40 are Mitochondrial intermembrane-facing; that stretch reads FHFNST. The chain crosses the membrane as a helical span at residues 41-66; it reads TLLTLGLTTNMLTMYQWWRDVIREST. Residues 67 to 72 are Mitochondrial matrix-facing; it reads FQGHHT. The chain crosses the membrane as a helical span at residues 73-105; it reads PTVQKGLRYGMILFIISEVLFFTGFFWAFYHSS. Residues 106–128 are Mitochondrial intermembrane-facing; sequence LAPTPELGGCWPPTGIHPLNPLE. Residues 129 to 152 traverse the membrane as a helical segment; the sequence is VPLLNTSVLLASGVSITWAHHSLM. Over 153 to 155 the chain is Mitochondrial matrix; the sequence is EGN. The chain crosses the membrane as a helical span at residues 156 to 183; it reads RNPMLQALFITIALGIYFTLLQASEYYE. Residues 184–190 are Mitochondrial intermembrane-facing; the sequence is APFTISD. The chain crosses the membrane as a helical span at residues 191–223; it reads GVYGSTFFVATGFHGLHVIIGSTFLIVCFFRQL. Residues 224–232 lie on the Mitochondrial matrix side of the membrane; that stretch reads KFHFTSNHH. A helical transmembrane segment spans residues 233–256; it reads FGFEAAAWYWHFVDVVWLFLYVSI. The Mitochondrial intermembrane segment spans residues 257-261; sequence YWWGS.

It belongs to the cytochrome c oxidase subunit 3 family. As to quaternary structure, component of the cytochrome c oxidase (complex IV, CIV), a multisubunit enzyme composed of 14 subunits. The complex is composed of a catalytic core of 3 subunits MT-CO1, MT-CO2 and MT-CO3, encoded in the mitochondrial DNA, and 11 supernumerary subunits COX4I, COX5A, COX5B, COX6A, COX6B, COX6C, COX7A, COX7B, COX7C, COX8 and NDUFA4, which are encoded in the nuclear genome. The complex exists as a monomer or a dimer and forms supercomplexes (SCs) in the inner mitochondrial membrane with NADH-ubiquinone oxidoreductase (complex I, CI) and ubiquinol-cytochrome c oxidoreductase (cytochrome b-c1 complex, complex III, CIII), resulting in different assemblies (supercomplex SCI(1)III(2)IV(1) and megacomplex MCI(2)III(2)IV(2)).

Its subcellular location is the mitochondrion inner membrane. The enzyme catalyses 4 Fe(II)-[cytochrome c] + O2 + 8 H(+)(in) = 4 Fe(III)-[cytochrome c] + 2 H2O + 4 H(+)(out). Component of the cytochrome c oxidase, the last enzyme in the mitochondrial electron transport chain which drives oxidative phosphorylation. The respiratory chain contains 3 multisubunit complexes succinate dehydrogenase (complex II, CII), ubiquinol-cytochrome c oxidoreductase (cytochrome b-c1 complex, complex III, CIII) and cytochrome c oxidase (complex IV, CIV), that cooperate to transfer electrons derived from NADH and succinate to molecular oxygen, creating an electrochemical gradient over the inner membrane that drives transmembrane transport and the ATP synthase. Cytochrome c oxidase is the component of the respiratory chain that catalyzes the reduction of oxygen to water. Electrons originating from reduced cytochrome c in the intermembrane space (IMS) are transferred via the dinuclear copper A center (CU(A)) of subunit 2 and heme A of subunit 1 to the active site in subunit 1, a binuclear center (BNC) formed by heme A3 and copper B (CU(B)). The BNC reduces molecular oxygen to 2 water molecules using 4 electrons from cytochrome c in the IMS and 4 protons from the mitochondrial matrix. The sequence is that of Cytochrome c oxidase subunit 3 (MT-CO3) from Madoqua guentheri (Guenther's dik-dik).